We begin with the raw amino-acid sequence, 122 residues long: Small ribosomal subunit protein uS13 (122 aa).

The segment at 95-122 (NLPVRGQRTHTNARTRKGKAKPIAGKKK) is disordered.

It belongs to the universal ribosomal protein uS13 family. As to quaternary structure, part of the 30S ribosomal subunit. Forms a loose heterodimer with protein S19. Forms two bridges to the 50S subunit in the 70S ribosome.

Located at the top of the head of the 30S subunit, it contacts several helices of the 16S rRNA. In the 70S ribosome it contacts the 23S rRNA (bridge B1a) and protein L5 of the 50S subunit (bridge B1b), connecting the 2 subunits; these bridges are implicated in subunit movement. Contacts the tRNAs in the A and P-sites. This Methylobacterium nodulans (strain LMG 21967 / CNCM I-2342 / ORS 2060) protein is Small ribosomal subunit protein uS13.